A 123-amino-acid chain; its full sequence is MPTISQLIRKPRHEKAYREKARHLEACPQKRGVCTRVYTTTPKKPNSALRKVAKVRLTNGFEVIGYIPGEGHNLQEHSVVMIRGGRVKDLPGVRYHILRGVLDTQGVKNRKQRRSKYGAKRPK.

D89 is subject to 3-methylthioaspartic acid.

It belongs to the universal ribosomal protein uS12 family. As to quaternary structure, part of the 30S ribosomal subunit. Contacts proteins S8 and S17. May interact with IF1 in the 30S initiation complex.

Functionally, with S4 and S5 plays an important role in translational accuracy. In terms of biological role, interacts with and stabilizes bases of the 16S rRNA that are involved in tRNA selection in the A site and with the mRNA backbone. Located at the interface of the 30S and 50S subunits, it traverses the body of the 30S subunit contacting proteins on the other side and probably holding the rRNA structure together. The combined cluster of proteins S8, S12 and S17 appears to hold together the shoulder and platform of the 30S subunit. This chain is Small ribosomal subunit protein uS12, found in Beijerinckia indica subsp. indica (strain ATCC 9039 / DSM 1715 / NCIMB 8712).